Reading from the N-terminus, the 345-residue chain is Phosphoribosylformylglycinamidine cyclo-ligase (345 aa).

Belongs to the AIR synthase family.

The protein resides in the cytoplasm. It catalyses the reaction 2-formamido-N(1)-(5-O-phospho-beta-D-ribosyl)acetamidine + ATP = 5-amino-1-(5-phospho-beta-D-ribosyl)imidazole + ADP + phosphate + H(+). The protein operates within purine metabolism; IMP biosynthesis via de novo pathway; 5-amino-1-(5-phospho-D-ribosyl)imidazole from N(2)-formyl-N(1)-(5-phospho-D-ribosyl)glycinamide: step 2/2. The chain is Phosphoribosylformylglycinamidine cyclo-ligase from Limosilactobacillus fermentum (strain NBRC 3956 / LMG 18251) (Lactobacillus fermentum).